Consider the following 824-residue polypeptide: Leucine--tRNA ligase (824 aa).

The 'HIGH' region motif lies at 42-52; that stretch reads PYPSGKIHMGH. The short motif at 581–585 is the 'KMSKS' region element; it reads KMSKS. Residue K584 participates in ATP binding.

It belongs to the class-I aminoacyl-tRNA synthetase family.

It localises to the cytoplasm. It carries out the reaction tRNA(Leu) + L-leucine + ATP = L-leucyl-tRNA(Leu) + AMP + diphosphate. The protein is Leucine--tRNA ligase of Geobacter sp. (strain M21).